Reading from the N-terminus, the 323-residue chain is AA9 family lytic polysaccharide monooxygenase B (323 aa).

Positions 1–18 (MKSFTLTTLAALAGNAAA) are cleaved as a signal peptide. Positions 19 and 97 each coordinate Cu(2+). Cysteine 56 and cysteine 191 are joined by a disulfide. Residues histidine 177 and glutamine 186 each contribute to the O2 site. Tyrosine 188 is a binding site for Cu(2+). A CBM1 domain is found at 286–323 (CTVQKYQQCGGQGYTGCTNCASGSTCSAVSPPYYSQCV).

This sequence belongs to the polysaccharide monooxygenase AA9 family. Requires Cu(2+) as cofactor.

It is found in the secreted. The enzyme catalyses [(1-&gt;4)-beta-D-glucosyl]n+m + reduced acceptor + O2 = 4-dehydro-beta-D-glucosyl-[(1-&gt;4)-beta-D-glucosyl]n-1 + [(1-&gt;4)-beta-D-glucosyl]m + acceptor + H2O.. Its activity is regulated as follows. Is able to utilize various natural phenolic compounds as reducing agents. Most of these reducing agents are present in plants, either free or as lignin building blocks, such as sinapic acid, or as flavonoids such as catechin and dopamine. Phenolic compounds with 1,2-benzenediol and 1,2,3-benzenetriol moieties yield the highest release of oxidized and non-oxidized glucooligosaccharides from cellulose compared to monophenols or sulfur-containing compounds. Lytic polysaccharide monooxygenase (LPMO) that depolymerizes crystalline and amorphous polysaccharides via the oxidation of scissile alpha- or beta-(1-4)-glycosidic bonds, yielding C1 oxidation products. Catalysis by LPMOs requires the reduction of the active-site copper from Cu(II) to Cu(I) by a reducing agent and H(2)O(2) or O(2) as a cosubstrate. Is active on regenerated amorphous cellulose (RAC). The chain is AA9 family lytic polysaccharide monooxygenase B from Thermothelomyces thermophilus (strain ATCC 42464 / BCRC 31852 / DSM 1799) (Sporotrichum thermophile).